Reading from the N-terminus, the 263-residue chain is uncharacterized protein (263 aa).

Positions 1-22 (MEYLKRLALFISVIILTIFIMG) are cleaved as a signal peptide. Cys23 carries N-palmitoyl cysteine lipidation. Cys23 is lipidated: S-diacylglycerol cysteine.

The protein belongs to the staphylococcal tandem lipoprotein family.

The protein resides in the cell membrane. This is an uncharacterized protein from Staphylococcus aureus (strain MSSA476).